Reading from the N-terminus, the 406-residue chain is MSEFKSYDVVIIGSGPAGSLCGIECRKKGLSVLCIEKDEFPRFHIGESLTGNAGQIIRDLGLAEEMDAAGFPDKPGVNVIGSLSKNEFFIPILAPTWQVKRSDFDNMLKRKALEHGVEYQQGLVKDVIKHDGKVVGAIYKADDMEHQVRSKVLVDASGQNTFLSRKGIAGKREIEFFSQQIASFAHYKGVERDLPPFSTNTTILYSKQYHWSWIIPISPDTDSLGIVIPKDLYYKECKNPDDAIEWGMENISPEIRRRFQNAERIGDSQSMADFSYRIEPFVGDGWLCIGDAHRFLDPIFSYGVSFAMKEGIRAADAIKQAIDGNDWKTPFYAYRDWSNGGQQIAADLIRYFWIYPIFFGYQMQNPDLRDEVIRLLGGCCFDCEGWKAPTIFRNAIEEYDRKQMVG.

The FAD site is built by A17, E36, R42, H44, I45, S48, R101, V124, D291, and V304.

Belongs to the flavin-dependent halogenase family.

It carries out the reaction (1H-pyrrole-2-carbonyl)-[peptidyl-carrier protein] + 3 bromide + 3 FADH2 + 3 O2 = (3,4,5-tribromo-1H-pyrrole-2-carbonyl)-[peptidyl-carrier protein] + 3 FAD + 6 H2O. The catalysed reaction is (1H-pyrrole-2-carbonyl)-[peptidyl-carrier protein] + bromide + FADH2 + O2 = (5-bromo-1H-pyrrole-2-carbonyl)-[peptidyl-carrier protein] + FAD + 2 H2O. The enzyme catalyses (5-bromo-1H-pyrrole-2-carbonyl)-[peptidyl-carrier protein] + bromide + FADH2 + O2 = (4,5-dibromo-1H-pyrrole-2-carbonyl)-[peptidyl-carrier protein] + FAD + 2 H2O. It catalyses the reaction (4,5-dibromo-1H-pyrrole-2-carbonyl)-[peptidyl-carrier protein] + bromide + FADH2 + O2 = (3,4,5-tribromo-1H-pyrrole-2-carbonyl)-[peptidyl-carrier protein] + FAD + 2 H2O. Its function is as follows. Brominase involved in the biosynthesis of polybrominated aromatic organic compounds. Catalyzes three successive rounds of bromination of pyrrolyl-S-Bmp1 to produce mono-, di- and tribromopyrrolyl-S-Bmp1. This is 1H-pyrrole-2-carbonyl-[peptidyl-carrier protein] brominase from Pseudoalteromonas luteoviolacea (strain 2ta16).